The chain runs to 70 residues: Small ribosomal subunit protein bS21C (70 aa).

The protein belongs to the bacterial ribosomal protein bS21 family.

The chain is Small ribosomal subunit protein bS21C from Burkholderia pseudomallei (strain 1710b).